The chain runs to 507 residues: Lysine--tRNA ligase (507 aa).

Mg(2+)-binding residues include Glu406 and Glu413.

Belongs to the class-II aminoacyl-tRNA synthetase family. In terms of assembly, homodimer. The cofactor is Mg(2+).

It localises to the cytoplasm. The enzyme catalyses tRNA(Lys) + L-lysine + ATP = L-lysyl-tRNA(Lys) + AMP + diphosphate. This chain is Lysine--tRNA ligase, found in Wolinella succinogenes (strain ATCC 29543 / DSM 1740 / CCUG 13145 / JCM 31913 / LMG 7466 / NCTC 11488 / FDC 602W) (Vibrio succinogenes).